A 178-amino-acid chain; its full sequence is Cell division protein ZapC (178 aa).

Belongs to the ZapC family. As to quaternary structure, interacts directly with FtsZ.

It is found in the cytoplasm. Its function is as follows. Contributes to the efficiency of the cell division process by stabilizing the polymeric form of the cell division protein FtsZ. Acts by promoting interactions between FtsZ protofilaments and suppressing the GTPase activity of FtsZ. The polypeptide is Cell division protein ZapC (Pseudoalteromonas atlantica (strain T6c / ATCC BAA-1087)).